Consider the following 73-residue polypeptide: Large ribosomal subunit protein bL31 (73 aa).

It belongs to the bacterial ribosomal protein bL31 family. Type A subfamily. Part of the 50S ribosomal subunit. Contacts protein L9.

Binds the 23S rRNA and interacts with the tRNA in the E site. This Deinococcus radiodurans (strain ATCC 13939 / DSM 20539 / JCM 16871 / CCUG 27074 / LMG 4051 / NBRC 15346 / NCIMB 9279 / VKM B-1422 / R1) protein is Large ribosomal subunit protein bL31 (rpmE).